The following is an 80-amino-acid chain: Tripartite terminase subunit 2 (80 aa).

The protein belongs to the herpesviridae TRM2 protein family. In terms of assembly, associates with TRM1 and TRM3 to form the tripartite terminase complex.

It is found in the host nucleus. Functionally, component of the molecular motor that translocates viral genomic DNA in empty capsid during DNA packaging. Forms a tripartite terminase complex together with TRM1 and TRM3 in the host cytoplasm. Once the complex reaches the host nucleus, it interacts with the capsid portal vertex. This portal forms a ring in which genomic DNA is translocated into the capsid. The chain is Tripartite terminase subunit 2 from Homo sapiens (Human).